Consider the following 341-residue polypeptide: MQYKKSLVASALVATSLAAYAPKDPWSTLTPSATYKGGITDYSSTFGIAVEPIATTASSKAKRAAAISQIGDGQIQATTKTTAAAVSQIGDGQIQATTKTKAAAVSQIGDGQIQATTKTTSAKTTAAAVSQIGDGQIQATTKTKAAAVSQIGDGQIQATTKTTAAAVSQIGDGQIQATTKTTAAAVSQIGDGQIQATTNTTVAPVSQITDGQIQATTLTSATIIPSPAPAPITNGTDPVTAETCKSSGTLEMNLKGGILTDGKGRIGSIVANRQFQFDGPPPQAGAIYAAGWSITPEGNLAIGDQDTFYQCLSGNFYNLYDEHIGTQCNAVHLQAIDLVNC.

A signal peptide spans 1-18 (MQYKKSLVASALVATSLA). Residues 19 to 63 (AYAPKDPWSTLTPSATYKGGITDYSSTFGIAVEPIATTASSKAKR) constitute a propeptide that is removed on maturation. 8 PIR1/2/3 repeats span residues 64-82 (AAAI…TKTT), 83-101 (AAAV…TKTK), 102-120 (AAAV…TKTT), 126-144 (AAAV…TKTK), 145-163 (AAAV…TKTT), 164-182 (AAAV…TKTT), 183-201 (AAAV…TNTT), and 202-220 (VAPV…TLTS).

The protein belongs to the PIR protein family. Post-translationally, covalently linked to beta-1,3-glucan of the inner cell wall layer via an alkali-sensitive ester linkage between the gamma-carboxyl group of glutamic acids, arising from specific glutamines within the PIR1/2/3 repeats, and hydroxyl groups of glucoses of beta-1,3-glucan chains. O-glycosylated. Extensively O-mannosylated.

Its subcellular location is the secreted. The protein localises to the cell wall. In terms of biological role, component of the outer cell wall layer. Required for stability of the cell wall and for optimal growth. Required for resistance against several antifungal and cell wall-perturbing agents and for tolerance to heat shock. The sequence is that of Cell wall mannoprotein PIR1 (PIR1) from Saccharomyces cerevisiae (strain YJM789) (Baker's yeast).